Consider the following 562-residue polypeptide: NAD-dependent malic enzyme (562 aa).

Y101 acts as the Proton donor in catalysis. An NAD(+)-binding site is contributed by R154. Catalysis depends on K172, which acts as the Proton acceptor. 3 residues coordinate a divalent metal cation: E243, D244, and D267. NAD(+) is bound by residues D267 and N415.

The protein belongs to the malic enzymes family. In terms of assembly, homotetramer. It depends on Mg(2+) as a cofactor. Requires Mn(2+) as cofactor.

The catalysed reaction is (S)-malate + NAD(+) = pyruvate + CO2 + NADH. It catalyses the reaction oxaloacetate + H(+) = pyruvate + CO2. This chain is NAD-dependent malic enzyme, found in Shewanella putrefaciens (strain CN-32 / ATCC BAA-453).